The chain runs to 848 residues: Probable serine/threonine-protein kinase DDB_G0278535 (848 aa).

Low complexity-rich tracts occupy residues 1-52 (MNKS…NNNH), 60-85 (TAAT…TSST), and 95-116 (TSNS…VSTS). Residues 1–117 (MNKSSSASTV…SSSPQVSTSV (117 aa)) are disordered. ANK repeat units lie at residues 181 to 212 (MDQT…KMDI), 218 to 248 (SGYT…NVNI), 252 to 285 (DKNS…NVNA), 289 to 320 (NGET…EVNV), and 324 to 353 (RGES…DITI). The SAM domain occupies 378-441 (KNVQDIFNWL…IRNCRILRDQ (64 aa)). The tract at residues 448-478 (NSNVTTGSGSSGSTTTTTTTTTTTSGCGGLN) is disordered. Low complexity predominate over residues 452-472 (TTGSGSSGSTTTTTTTTTTTS). Residues 529–799 (LEYTLKLGSG…TLNRLRHEYM (271 aa)) form the Protein kinase domain. Residues 535–543 (LGSGSSGKV) and Lys-556 contribute to the ATP site. Catalysis depends on Asp-650, which acts as the Proton acceptor. Positions 810–848 (RKLPSLSPPPQPTTTTTTTTSSSTSTNNINNNINNNNNT) are disordered. Residues 822–848 (TTTTTTTTSSSTSTNNINNNINNNNNT) are compositionally biased toward low complexity.

The protein belongs to the protein kinase superfamily. TKL Ser/Thr protein kinase family.

It catalyses the reaction L-seryl-[protein] + ATP = O-phospho-L-seryl-[protein] + ADP + H(+). The enzyme catalyses L-threonyl-[protein] + ATP = O-phospho-L-threonyl-[protein] + ADP + H(+). In Dictyostelium discoideum (Social amoeba), this protein is Probable serine/threonine-protein kinase DDB_G0278535.